The following is an 853-amino-acid chain: ATP-dependent zinc metalloprotease FtsH (853 aa).

Residues M1–K5 are Cytoplasmic-facing. Residues Y6–F26 traverse the membrane as a helical segment. The Extracellular portion of the chain corresponds to S27–S113. Residues F114 to F134 traverse the membrane as a helical segment. At F135–G853 the chain is on the cytoplasmic side. G205–T212 is an ATP binding site. Zn(2+) is bound at residue H427. E428 is an active-site residue. 2 residues coordinate Zn(2+): H431 and D503. Basic and acidic residues-rich tracts occupy residues E619–V632 and A639–K648. Positions E619–G853 are disordered. The segment covering P677–G695 has biased composition (low complexity). Composition is skewed to polar residues over residues T728–S739 and M770–P788. Residues L796–V813 show a composition bias toward basic and acidic residues.

In the central section; belongs to the AAA ATPase family. The protein in the C-terminal section; belongs to the peptidase M41 family. As to quaternary structure, homohexamer. Zn(2+) serves as cofactor.

The protein localises to the cell membrane. In terms of biological role, acts as a processive, ATP-dependent zinc metallopeptidase for both cytoplasmic and membrane proteins. Plays a role in the quality control of integral membrane proteins. In Corynebacterium glutamicum (strain ATCC 13032 / DSM 20300 / JCM 1318 / BCRC 11384 / CCUG 27702 / LMG 3730 / NBRC 12168 / NCIMB 10025 / NRRL B-2784 / 534), this protein is ATP-dependent zinc metalloprotease FtsH.